Here is a 323-residue protein sequence, read N- to C-terminus: Lipoyl synthase (323 aa).

Cys61, Cys66, Cys72, Cys87, Cys91, Cys94, and Ser300 together coordinate [4Fe-4S] cluster. The 217-residue stretch at 73–289 (WDKKHATFMI…ETVAYSKGFL (217 aa)) folds into the Radical SAM core domain.

It belongs to the radical SAM superfamily. Lipoyl synthase family. [4Fe-4S] cluster serves as cofactor.

It localises to the cytoplasm. It catalyses the reaction [[Fe-S] cluster scaffold protein carrying a second [4Fe-4S](2+) cluster] + N(6)-octanoyl-L-lysyl-[protein] + 2 oxidized [2Fe-2S]-[ferredoxin] + 2 S-adenosyl-L-methionine + 4 H(+) = [[Fe-S] cluster scaffold protein] + N(6)-[(R)-dihydrolipoyl]-L-lysyl-[protein] + 4 Fe(3+) + 2 hydrogen sulfide + 2 5'-deoxyadenosine + 2 L-methionine + 2 reduced [2Fe-2S]-[ferredoxin]. It participates in protein modification; protein lipoylation via endogenous pathway; protein N(6)-(lipoyl)lysine from octanoyl-[acyl-carrier-protein]: step 2/2. Functionally, catalyzes the radical-mediated insertion of two sulfur atoms into the C-6 and C-8 positions of the octanoyl moiety bound to the lipoyl domains of lipoate-dependent enzymes, thereby converting the octanoylated domains into lipoylated derivatives. This Rhizobium etli (strain CIAT 652) protein is Lipoyl synthase.